Reading from the N-terminus, the 396-residue chain is Probable mannan endo-1,4-beta-mannosidase A-2 (396 aa).

Positions 1–21 are cleaved as a signal peptide; it reads MKVPRLLLALGGLASIHIASA. Trp99 serves as a coordination point for substrate. Asn120 carries an N-linked (GlcNAc...) asparagine glycan. Asn212 contacts substrate. Glu213 (proton donor) is an active-site residue. An N-linked (GlcNAc...) asparagine glycan is attached at Asn270. Tyr288 is a substrate binding site. Residue Glu321 is the Nucleophile of the active site. Trp351 is a substrate binding site.

This sequence belongs to the glycosyl hydrolase 5 (cellulase A) family.

Its subcellular location is the secreted. The enzyme catalyses Random hydrolysis of (1-&gt;4)-beta-D-mannosidic linkages in mannans, galactomannans and glucomannans.. In terms of biological role, endo-1,4-mannanase, a crucial enzyme for depolymerization of seed galactomannans and wood galactoglucomannans. The protein is Probable mannan endo-1,4-beta-mannosidase A-2 (manA-2) of Aspergillus terreus (strain NIH 2624 / FGSC A1156).